The chain runs to 610 residues: MGLKAAQKTLFPLRSIDDVVRLFAAELGREEPDLVLLSLVLGFVEHFLAVNRVIPTNVPELTFQPSPAPDPPGGLTYFPVADLSIIAALYARFTAQIRGAVDLSLYPREGGVSSRELVKKVSDVIWNSLSRSYFKDRAHIQSLFSFITGTKLDSSGVAFAVVGACQALGLRDVHLALSEDHAWVVFGPNGEQTAEVTWHGKGNEDRRGQTVNAGVAERSWLYLKGSYMRCDRKMEVAFMVCAINPSIDLHTDSLELLQLQQKLLWLLYDLGHLERYPMALGNLADLEELEPTPGRPDPLTLYHKGIASAKTYYRDEHIYPYMYLAGYHCRNRNVREALQAWADTATVIQDYNYCREDEEIYKEFFEVANDVIPNLLKEAASLLEAGEERPGEQSQGTQSQGSALQDPECFAHLLRFYDGICKWEEGSPTPVLHVGWATFLVQSLGRFEGQVRQKVRIVSREAEAAEAEEPWGEEAREGRRRGPRRESKPEEPPPPKKPALDKGLGTGQGAVSGPPRKPPGTVAGTARGPEGGSTAQVPAPTASPPPEGPVLTFQSEKMKGMKELLVATKINSSAIKLQLTAQSQVQMKKQKVSTPSDYTLSFLKRQRKGL.

An interaction with FANCD2 region spans residues 214–390; that stretch reads GVAERSWLYL…SLLEAGEERP (177 aa). The interval 460–552 is disordered; that stretch reads REAEAAEAEE…SPPPEGPVLT (93 aa). Residues 484–500 are compositionally biased toward basic and acidic residues; that stretch reads RRESKPEEPPPPKKPAL. Phosphoserine is present on residues Ser487 and Ser543. At Thr594 the chain carries Phosphothreonine.

As to quaternary structure, component of the MLL-HCF complex, at least composed of KMT2A/MLL1, MEN1, ASH2L, RBBP5, DPY30, WDR5, HCFC1 and HCFC2. Component of the menin-associated histone methyltransferase complex, at least composed of KMT2B/MLL4, MEN1, ASH2L, RBBP5, DPY30 and WDR5. Interacts with POLR2B. Interacts with POLR2A phosphorylated at 'Ser-5', but not with the unphosphorylated, nor 'Ser-2' phosphorylated POLR2A forms. Interacts with FANCD2 and DBF4. Interacts with JUND (via MBM motif); inhibits the interaction of JUND with MAPK10 and the phosphorylation of JUND by MAP kinases MAPK8 and MAPK10. Interacts with SMAD3, but not with SMAD2, nor SMAD4. Directly interacts with NFKB1, NFKB2 and RELA. Interacts with KMT2A (via MBM motif). The KMT2A-MEN1 complex interacts with PSIP1 with a greater affinity as MEN1 enhances interaction of KMT2A with PSIP1. Interacts with the fusion protein KMT2A-MLLT3. Ubiquitous.

Its subcellular location is the nucleus. Functionally, essential component of a MLL/SET1 histone methyltransferase (HMT) complex, a complex that specifically methylates 'Lys-4' of histone H3 (H3K4). Functions as a transcriptional regulator. Binds to the TERT promoter and represses telomerase expression. Plays a role in TGFB1-mediated inhibition of cell-proliferation, possibly regulating SMAD3 transcriptional activity. Represses JUND-mediated transcriptional activation on AP1 sites, as well as that mediated by NFKB subunit RELA. Positively regulates HOXC8 and HOXC6 gene expression. May be involved in normal hematopoiesis through the activation of HOXA9 expression. May be involved in DNA repair. The chain is Menin (MEN1) from Homo sapiens (Human).